The chain runs to 209 residues: MARYTGPQCKLCRREGMKLYLKGERCFTDKCAFDRRPFAPGDHGRDKKKLTQYGIQLRAKQTMKRIYGVLETQFRRYYETASRKSGDTRENLVVQVERRLDNVVYRLGFAVNRTTARQLVNHGHVLVNGRKVTIPSYQVRPGDVIEIREKSRDILPVKNAIELNKDKNTMPWLTVDYENYKGTYERNPKLEEVIDLPVDVQAIIELYSR.

One can recognise an S4 RNA-binding domain in the interval Arg-98–Asn-164.

It belongs to the universal ribosomal protein uS4 family. Part of the 30S ribosomal subunit. Contacts protein S5. The interaction surface between S4 and S5 is involved in control of translational fidelity.

Functionally, one of the primary rRNA binding proteins, it binds directly to 16S rRNA where it nucleates assembly of the body of the 30S subunit. With S5 and S12 plays an important role in translational accuracy. The polypeptide is Small ribosomal subunit protein uS4 (Thermosipho africanus (strain TCF52B)).